The sequence spans 274 residues: Glucosamine-6-phosphate deaminase (274 aa).

The active-site Proton acceptor; for enolization step is the D72. Catalysis depends on D141, which acts as the For ring-opening step. H143 functions as the Proton acceptor; for ring-opening step in the catalytic mechanism. E148 acts as the For ring-opening step in catalysis.

This sequence belongs to the glucosamine/galactosamine-6-phosphate isomerase family. As to quaternary structure, homohexamer.

Its subcellular location is the cytoplasm. The catalysed reaction is alpha-D-glucosamine 6-phosphate + H2O = beta-D-fructose 6-phosphate + NH4(+). Its pathway is nucleotide-sugar biosynthesis; UDP-N-acetyl-alpha-D-glucosamine biosynthesis; alpha-D-glucosamine 6-phosphate from D-fructose 6-phosphate: step 1/1. Catalyzes the reversible conversion of alpha-D-glucosamine 6-phosphate (GlcN-6P) into beta-D-fructose 6-phosphate (Fru-6P) and ammonium ion, a regulatory reaction step in de novo uridine diphosphate-N-acetyl-alpha-D-glucosamine (UDP-GlcNAc) biosynthesis via hexosamine pathway. This Drosophila pseudoobscura pseudoobscura (Fruit fly) protein is Glucosamine-6-phosphate deaminase.